The primary structure comprises 281 residues: Protoheme IX farnesyltransferase (281 aa).

9 consecutive transmembrane segments (helical) span residues 13 to 33 (VIWLLVLSALVGYIAAAGPLV), 38 to 58 (LIELTVVGFLSTGGSAAFNMY), 85 to 105 (ALTFSIAVSLSGFTLSYLWLG), 107 to 127 (WVTLMIALGWFFYAVLYTIML), 132 to 152 (WLNIVIGGFAGNAALLSGWIM), 161 to 181 (ILLSMVIYVWIPAHIWSLAYY), 206 to 226 (IISILNLVSIIYMLVLYQLYM), 227 to 247 (AKLIGYILVIPATLAGIIVTI), and 261 to 281 (MFKATSPILLLFLLAVIISRI).

The protein belongs to the UbiA prenyltransferase family. Protoheme IX farnesyltransferase subfamily.

The protein localises to the cell membrane. It catalyses the reaction heme b + (2E,6E)-farnesyl diphosphate + H2O = Fe(II)-heme o + diphosphate. It functions in the pathway porphyrin-containing compound metabolism; heme O biosynthesis; heme O from protoheme: step 1/1. In terms of biological role, converts heme B (protoheme IX) to heme O by substitution of the vinyl group on carbon 2 of heme B porphyrin ring with a hydroxyethyl farnesyl side group. The protein is Protoheme IX farnesyltransferase of Caldivirga maquilingensis (strain ATCC 700844 / DSM 13496 / JCM 10307 / IC-167).